Consider the following 338-residue polypeptide: Uroporphyrinogen decarboxylase (338 aa).

Residues 27–31 (RQAGR), D77, Y151, S203, and H317 each bind substrate.

It belongs to the uroporphyrinogen decarboxylase family. Homodimer.

The protein localises to the cytoplasm. The enzyme catalyses uroporphyrinogen III + 4 H(+) = coproporphyrinogen III + 4 CO2. The protein operates within porphyrin-containing compound metabolism; protoporphyrin-IX biosynthesis; coproporphyrinogen-III from 5-aminolevulinate: step 4/4. Its function is as follows. Catalyzes the decarboxylation of four acetate groups of uroporphyrinogen-III to yield coproporphyrinogen-III. The polypeptide is Uroporphyrinogen decarboxylase (Wolbachia pipientis wMel).